A 343-amino-acid polypeptide reads, in one-letter code: Cyclic AMP-AMP-AMP synthase (343 aa).

This sequence belongs to the CD-NTase family. D01 subfamily. Mg(2+) serves as cofactor.

It carries out the reaction 3 ATP = 2',3',3'-c-tri-AMP + 3 diphosphate. In terms of biological role, cyclic nucleotide synthase (second messenger synthase) of a CBASS antivirus system. CBASS (cyclic oligonucleotide-based antiphage signaling system) provides immunity against bacteriophage. The CD-NTase protein synthesizes cyclic nucleotides in response to infection; these serve as specific second messenger signals. The signals activate a diverse range of effectors, leading to bacterial cell death and thus abortive phage infection. A type II-C(AAAA) CBASS system. Its function is as follows. Cyclic trinucleotide synthase that catalyzes the synthesis of 2',3',3'-cyclic AMP-AMP-AMP (2',3',3'-c-tri-AMP or 2'3'3'-cAAA) as the major product, as well as another cyclic AMP(4) 2'-5'-linked minor product that acts as a second messenger for cell signal transduction. This Acinetobacter sp. (strain ATCC 27244 / 9458) protein is Cyclic AMP-AMP-AMP synthase.